The sequence spans 358 residues: UDP-N-acetylglucosamine--N-acetylmuramyl-(pentapeptide) pyrophosphoryl-undecaprenol N-acetylglucosamine transferase (358 aa).

UDP-N-acetyl-alpha-D-glucosamine is bound by residues 11–13, asparagine 122, arginine 161, serine 189, isoleucine 243, 262–267, and glutamine 288; these read TGG and ALTVCE.

The protein belongs to the glycosyltransferase 28 family. MurG subfamily.

The protein resides in the cell inner membrane. The enzyme catalyses di-trans,octa-cis-undecaprenyl diphospho-N-acetyl-alpha-D-muramoyl-L-alanyl-D-glutamyl-meso-2,6-diaminopimeloyl-D-alanyl-D-alanine + UDP-N-acetyl-alpha-D-glucosamine = di-trans,octa-cis-undecaprenyl diphospho-[N-acetyl-alpha-D-glucosaminyl-(1-&gt;4)]-N-acetyl-alpha-D-muramoyl-L-alanyl-D-glutamyl-meso-2,6-diaminopimeloyl-D-alanyl-D-alanine + UDP + H(+). The protein operates within cell wall biogenesis; peptidoglycan biosynthesis. Cell wall formation. Catalyzes the transfer of a GlcNAc subunit on undecaprenyl-pyrophosphoryl-MurNAc-pentapeptide (lipid intermediate I) to form undecaprenyl-pyrophosphoryl-MurNAc-(pentapeptide)GlcNAc (lipid intermediate II). This is UDP-N-acetylglucosamine--N-acetylmuramyl-(pentapeptide) pyrophosphoryl-undecaprenol N-acetylglucosamine transferase from Coxiella burnetii (strain Dugway 5J108-111).